The sequence spans 857 residues: uncharacterized protein (857 aa).

Disordered stretches follow at residues 316-339 (PPAP…TKEN), 484-561 (AKQP…PRTN), 619-777 (GQFP…PKPQ), and 809-836 (EQRP…STGK). Basic and acidic residues-rich tracts occupy residues 324 to 339 (PENK…TKEN), 518 to 534 (KKTE…KAEE), and 630 to 640 (QRAESSIDKDC). Polar residues predominate over residues 683–700 (RTTTVQPHSHSAQPTTLR). The span at 708 to 725 (SSSLIASAKPAPPISSSS) shows a compositional bias: low complexity. Residues 726-738 (TGPNVTNPNQSSA) are compositionally biased toward polar residues. The span at 809 to 828 (EQRPEREAMKRQAQQERENA) shows a compositional bias: basic and acidic residues.

This is an uncharacterized protein from Mus musculus (Mouse).